The following is a 447-amino-acid chain: Maintenance of mitochondrial morphology protein 1 (447 aa).

Residues 1–109 (MKSPNETSFT…VFSAWSFAQG (109 aa)) are Lumenal-facing. A helical membrane pass occupies residues 110-130 (LVIGQLSVIVVLIFFIKFFIF). Over 131 to 447 (SEGPIKTEGP…DDISMKSTDL (317 aa)) the chain is Cytoplasmic. The SMP-LTD domain occupies 208–421 (SPETLDWFNV…EPRFQFIKLP (214 aa)).

Belongs to the MMM1 family. As to quaternary structure, homodimer. Component of the ER-mitochondria encounter structure (ERMES) or MDM complex, composed of MMM1, MDM10, MDM12 and MDM34. An MMM1 homodimer associates with one molecule of MDM12 on each side in a pairwise head-to-tail manner, and the SMP-LTD domains of MMM1 and MDM12 generate a continuous hydrophobic tunnel for phospholipid trafficking.

The protein resides in the endoplasmic reticulum membrane. Component of the ERMES/MDM complex, which serves as a molecular tether to connect the endoplasmic reticulum (ER) and mitochondria. Components of this complex are involved in the control of mitochondrial shape and protein biogenesis, and function in nonvesicular lipid trafficking between the ER and mitochondria. The MDM12-MMM1 subcomplex functions in the major beta-barrel assembly pathway that is responsible for biogenesis of all outer membrane beta-barrel proteins, and acts in a late step after the SAM complex. The MDM10-MDM12-MMM1 subcomplex further acts in the TOM40-specific pathway after the action of the MDM12-MMM1 complex. Essential for establishing and maintaining the structure of mitochondria and maintenance of mtDNA nucleoids. The protein is Maintenance of mitochondrial morphology protein 1 of Lachancea thermotolerans (strain ATCC 56472 / CBS 6340 / NRRL Y-8284) (Yeast).